The chain runs to 481 residues: Cys-Gly metallodipeptidase DUG1 (481 aa).

His-102 contacts Zn(2+). Residue Asp-104 is part of the active site. A Zn(2+)-binding site is contributed by Asp-137. Residue Glu-171 is the Proton acceptor of the active site. 3 residues coordinate Zn(2+): Glu-172, Asp-200, and His-450. At Ser-451 the chain carries Phosphoserine.

It belongs to the peptidase M20A family. In terms of assembly, homodimer. Component of the GSH degradosomal complex composed of at least DUG1, DUG2 and DUG3. Zn(2+) serves as cofactor. The cofactor is Mn(2+).

The protein localises to the cytoplasm. It localises to the mitochondrion. In terms of biological role, catalytic component of the GSH degradosomal complex involved in the degradation of glutathione (GSH) and other peptides containing a gamma-glu-X bond. Also functions in a DUG2-DUG3-independent manner as a dipeptidase with high specificity for Cys-Gly and no activity toward tri- or tetrapeptides. In Saccharomyces cerevisiae (strain ATCC 204508 / S288c) (Baker's yeast), this protein is Cys-Gly metallodipeptidase DUG1 (DUG1).